The primary structure comprises 2368 residues: MARFGDEMPGRYGAGGGGSGPAAGVVVGAAGGRGAGGSRQGGQPGAQRMYKQSMAQRARTMALYNPIPVRQNCLTVNRSLFLFSEDNVVRKYAKKITEWPPFEYMILATIIANCIVLALEQHLPDDDKTPMSERLDDTEPYFIGIFCFEAGIKIVALGFAFHKGSYLRNGWNVMDFVVVLTGILATVGTEFDLRTLRAVRVLRPLKLVSGIPSLQVVLKSIMKAMIPLLQIGLLLFFAILIFAIIGLEFYMGKFHTTCFEEGTDDIQGESPAPCGTEEPARTCPNGTKCQPYWEGPNNGITQFDNILFAVLTVFQCITMEGWTDLLYNSNDASGNTWNWLYFIPLIIIGSFFMLNLVLGVLSGEFAKERERVENRRAFLKLRRQQQIERELNGYMEWISKAEEVILAEDETDVEQRHPFDGALRRATLKKSKTDLLNPEEAEDQLADIASVGSPFARASIKSAKLENSTFFHKKERRMRFYIRRMVKTQAFYWTVLSLVALNTLCVAIVHYNQPEWLSDFLYYAEFIFLGLFMSEMFIKMYGLGTRPYFHSSFNCFDCGVIIGSIFEVIWAVIKPGTSFGISVLRALRLLRIFKVTKYWASLRNLVVSLLNSMKSIISLLFLLFLFIVVFALLGMQLFGGQFNFDEGTPPTNFDTFPAAIMTVFQILTGEDWNEVMYDGIKSQGGVQGGMVFSIYFIVLTLFGNYTLLNVFLAIAVDNLANAQELTKDEQEEEEAANQKLALQKAKEVAEVSPLSAANMSIAVKEQQKNQKPTKSVWEQRTSEMRKQNLLASREALYGDAAERWPTPYARPLRPDVKTHLDRPLVVDPQENRNNNTNKSRAPEALRPTARPRESARDPDARRAWPGSPERAPGREGPYGRESEPQQREHAPPREHAPWDADTERAKAGDAPRRHTHRPVAEGEPRRHRARRRPGDEPDDRPERRPRPRDATRPARAADGEGDDGERKRRHRHGPPAHDDRERRHRRRKENQGSGVPVSGPNLSTTRPIQQDLGRQDLPLAEDLDNMKNNKLATGEPASPHDSLGHSGLPPSPAKIGNSTNPGPALATNPQNAASRRTPNNPGNPSNPGPPKTPENSLIVTNPSSTQPNSAKTARKPEHMAVEIPPACPPLNHTVVQVNKNANPDPLPKKEEEKKEEEEADPGEDGPKPMPPYSSMFILSTTNPLRRLCHYILNLRYFEMCILMVIAMSSIALAAEDPVQPNAPRNNVLRYFDYVFTGVFTFEMVIKMIDLGLVLHQGAYFRDLWNILDFIVVSGALVAFAFTGNSKGKDINTIKSLRVLRVLRPLKTIKRLPKLKAVFDCVVNSLKNVFNILIVYMLFMFIFAVVAVQLFKGKFFHCTDESKEFERDCRGKYLLYEKNEVKARDREWKKYEFHYDNVLWALLTLFTVSTGEGWPQVLKHSVDATFENQGPSPGYRMEMSIFYVVYFVVFPFFFVNIFVALIIITFQEQGDKMMEEYSLEKNERACIDFAISAKPLTRHMPQNKQSFQYRMWQFVVSPPFEYTIMAMIALNTIVLMMKFYGASVAYENALRVFNIVFTSLFSLECVLKVMAFGILNYFRDAWNIFDFVTVLGSITDILVTEFGNNFINLSFLRLFRAARLIKLLRQGYTIRILLWTFVQSFKALPYVCLLIAMLFFIYAIIGMQVFGNIGIDGEDEDSDEDEFQITEHNNFRTFFQALMLLFRSATGEAWHNIMLSCLSGKPCDKNSGILTADCGNEFAYFYFVSFIFLCSFLMLNLFVAVIMDNFEYLTRDSSILGPHHLDEYVRVWAEYDPAACGRIHYKDMYSLLRVISPPLGLGKKCPHRVACKRLLRMDLPVADDNTVHFNSTLMALIRTALDIKIAKGGADKQQMDAELRKEMMAIWPNLSQKTLDLLVTPHKSTDLTVGKIYAAMMIMEYYRQSKAKKLQAMREEQNRTPLMFQRMEPPSPTQEGGPSQNALPSTQLDPGGGLMAHEGGMKESPSWVTQRAQEMFQKTGTWSPERGPPIDMPNSQPNSQSVEMREMGTDGYSDSEHYLPMEGQTRAASMPRLPAENQRRRGRPRGNDLSTISDTSPMKRSASVLGPKARRLDDYSLERVPPEENQRYHQRRRDRGHRTSERSLGRYTDVDTGLGTDLSMTTQSGDLPSKDRDQDRGRPKDRKHRPHHHHHHHHHHPPAPDRDRYAQERPDTGRARAREQRWSRSPSEGREHTTHRQGSSSVSGSPAPSTSGTSTPRRGRRQLPQTPCTPRPLVSYSPAPRRPAARRMAGPAAPPGGSPRGCRRAPRWPAHAPEGPRPRGADYTEPDSPREPPGGAHDPAPRSPRTPRAAGCASPRHGRRLPNGYYAGHGAPRPRTARRGAHDAYSESEDDWC.

Over 1–100 (MARFGDEMPG…KYAKKITEWP (100 aa)) the chain is Cytoplasmic. Residues 65 to 365 (NPIPVRQNCL…LVLGVLSGEF (301 aa)) form an I repeat. A helical transmembrane segment spans residues 101-119 (PFEYMILATIIANCIVLAL). Over 120–138 (EQHLPDDDKTPMSERLDDT) the chain is Extracellular. A helical transmembrane segment spans residues 139–156 (EPYFIGIFCFEAGIKIVA). Residues 157–168 (LGFAFHKGSYLR) lie on the Cytoplasmic side of the membrane. A helical transmembrane segment spans residues 169–184 (NGWNVMDFVVVLTGIL). The Extracellular portion of the chain corresponds to 185–192 (ATVGTEFD). The chain crosses the membrane as a helical span at residues 193-211 (LRTLRAVRVLRPLKLVSGI). Residues 212-230 (PSLQVVLKSIMKAMIPLLQ) are Cytoplasmic-facing. Residues 231 to 250 (IGLLLFFAILIFAIIGLEFY) form a helical membrane-spanning segment. Topologically, residues 251 to 337 (MGKFHTTCFE…NSNDASGNTW (87 aa)) are extracellular. Residue N285 is glycosylated (N-linked (GlcNAc...) asparagine). Position 320 (E320) interacts with Ca(2+). A helical membrane pass occupies residues 338–362 (NWLYFIPLIIIGSFFMLNLVLGVLS). The Cytoplasmic portion of the chain corresponds to 363–489 (GEFAKERERV…FYIRRMVKTQ (127 aa)). The segment at 385–402 (QQIERELNGYMEWISKAE) is binding to the beta subunit. T411 is modified (phosphothreonine). Phosphoserine occurs at positions 450 and 453. One copy of the II repeat lies at 475–719 (ERRMRFYIRR…VFLAIAVDNL (245 aa)). Residues 490-509 (AFYWTVLSLVALNTLCVAIV) traverse the membrane as a helical segment. The Extracellular portion of the chain corresponds to 510–523 (HYNQPEWLSDFLYY). Residues 524-543 (AEFIFLGLFMSEMFIKMYGL) traverse the membrane as a helical segment. Over 544 to 551 (GTRPYFHS) the chain is Cytoplasmic. The chain crosses the membrane as a helical span at residues 552-570 (SFNCFDCGVIIGSIFEVIW). Residues 571–580 (AVIKPGTSFG) lie on the Extracellular side of the membrane. The helical transmembrane segment at 581 to 599 (ISVLRALRLLRIFKVTKYW) threads the bilayer. Residues 600-618 (ASLRNLVVSLLNSMKSIIS) lie on the Cytoplasmic side of the membrane. The helical transmembrane segment at 619-638 (LLFLLFLFIVVFALLGMQLF) threads the bilayer. The Extracellular portion of the chain corresponds to 639–691 (GGQFNFDEGTPPTNFDTFPAAIMTVFQILTGEDWNEVMYDGIKSQGGVQGGMV). Residue E670 coordinates Ca(2+). A helical transmembrane segment spans residues 692 to 716 (FSIYFIVLTLFGNYTLLNVFLAIAV). Residues 717-1190 (DNLANAQELT…TNPLRRLCHY (474 aa)) lie on the Cytoplasmic side of the membrane. S752 and S755 each carry phosphoserine. A disordered region spans residues 762–781 (AVKEQQKNQKPTKSVWEQRT). A compositionally biased stretch (polar residues) spans 769 to 779 (NQKPTKSVWEQ). Residue S792 is modified to Phosphoserine. Disordered regions lie at residues 823 to 1117 (PLVV…RKPE) and 1137 to 1170 (VNKN…KPMP). 3 stretches are compositionally biased toward basic and acidic residues: residues 850 to 862 (RPRE…DARR), 871 to 924 (APGR…EGEP), and 932 to 958 (RPGD…RAAD). 3 positions are modified to phosphoserine: S1038, S1042, and S1051. Positions 1056–1073 (GNSTNPGPALATNPQNAA) are enriched in polar residues. Over residues 1074 to 1083 (SRRTPNNPGN) the composition is skewed to low complexity. Polar residues predominate over residues 1094–1111 (ENSLIVTNPSSTQPNSAK). A compositionally biased stretch (acidic residues) spans 1153–1163 (KKEEEEADPGE). One copy of the III repeat lies at 1182–1465 (NPLRRLCHYI…IFVALIIITF (284 aa)). Residues 1191-1214 (ILNLRYFEMCILMVIAMSSIALAA) traverse the membrane as a helical segment. The Extracellular portion of the chain corresponds to 1215–1231 (EDPVQPNAPRNNVLRYF). Residues 1232 to 1251 (DYVFTGVFTFEMVIKMIDLG) form a helical membrane-spanning segment. Over 1252 to 1258 (LVLHQGA) the chain is Cytoplasmic. A helical transmembrane segment spans residues 1259–1282 (YFRDLWNILDFIVVSGALVAFAFT). Residues 1283 to 1293 (GNSKGKDINTI) are Extracellular-facing. Residues 1294 to 1311 (KSLRVLRVLRPLKTIKRL) traverse the membrane as a helical segment. At 1312 to 1330 (PKLKAVFDCVVNSLKNVFN) the chain is on the cytoplasmic side. A helical membrane pass occupies residues 1331-1350 (ILIVYMLFMFIFAVVAVQLF). Over 1351-1437 (KGKFFHCTDE…QGPSPGYRME (87 aa)) the chain is Extracellular. Residue E1411 participates in Ca(2+) binding. Residues 1438-1462 (MSIFYVVYFVVFPFFFVNIFVALII) form a helical membrane-spanning segment. Over 1463–1518 (ITFQEQGDKMMEEYSLEKNERACIDFAISAKPLTRHMPQNKQSFQYRMWQFVVSPP) the chain is Cytoplasmic. Residues 1502 to 1765 (NKQSFQYRMW…LFVAVIMDNF (264 aa)) form an IV repeat. The helical transmembrane segment at 1519 to 1537 (FEYTIMAMIALNTIVLMMK) threads the bilayer. At 1538–1551 (FYGASVAYENALRV) the chain is on the extracellular side. The helical transmembrane segment at 1552–1573 (FNIVFTSLFSLECVLKVMAFGI) threads the bilayer. Topologically, residues 1574–1580 (LNYFRDA) are cytoplasmic. A helical transmembrane segment spans residues 1581 to 1600 (WNIFDFVTVLGSITDILVTE). Residues 1601 to 1607 (FGNNFIN) are Extracellular-facing. N1607 carries N-linked (GlcNAc...) asparagine glycosylation. The chain crosses the membrane as a helical span at residues 1608–1626 (LSFLRLFRAARLIKLLRQG). Topologically, residues 1627–1645 (YTIRILLWTFVQSFKALPY) are cytoplasmic. Residues 1646 to 1665 (VCLLIAMLFFIYAIIGMQVF) traverse the membrane as a helical segment. Topologically, residues 1666–1737 (GNIGIDGEDE…ILTADCGNEF (72 aa)) are extracellular. A helical transmembrane segment spans residues 1738-1763 (AYFYFVSFIFLCSFLMLNLFVAVIMD). At 1764-2368 (NFEYLTRDSS…AYSESEDDWC (605 aa)) the chain is on the cytoplasmic side. At T1935 the chain carries Phosphothreonine. Positions 1940-2368 (QRMEPPSPTQ…AYSESEDDWC (429 aa)) are disordered. Polar residues-rich tracts occupy residues 1948-1963 (TQEG…STQL) and 1981-1997 (SWVT…TGTW). Phosphoserine occurs at positions 1998, 2016, 2028, 2030, 2071, and 2091. Over residues 2008–2017 (PNSQPNSQSV) the composition is skewed to polar residues. The span at 2018–2034 (EMREMGTDGYSDSEHYL) shows a compositional bias: basic and acidic residues. Over residues 2063-2073 (DLSTISDTSPM) the composition is skewed to polar residues. Composition is skewed to basic and acidic residues over residues 2085-2102 (RRLD…ENQR) and 2143-2153 (PSKDRDQDRGR). Residues 2154 to 2172 (PKDRKHRPHHHHHHHHHHP) are compositionally biased toward basic residues. The span at 2173-2209 (PAPDRDRYAQERPDTGRARAREQRWSRSPSEGREHTT) shows a compositional bias: basic and acidic residues. The span at 2213–2231 (GSSSVSGSPAPSTSGTSTP) shows a compositional bias: low complexity. The segment covering 2289 to 2305 (EGPRPRGADYTEPDSPR) has biased composition (basic and acidic residues).

The protein belongs to the calcium channel alpha-1 subunit (TC 1.A.1.11) family. CACNA1A subfamily. As to quaternary structure, voltage-dependent calcium channels are multisubunit complexes, consisting of alpha-1, alpha-2, beta and delta subunits in a 1:1:1:1 ratio. The channel activity is directed by the pore-forming and voltage-sensitive alpha-1 subunit. In many cases, this subunit is sufficient to generate voltage-sensitive calcium channel activity. The auxiliary subunits beta and alpha-2/delta linked by a disulfide bridge regulate the channel activity. Interacts with CABP1. Interacts with the spider omega-agatoxin-IVA (AC P30288). Interacts with TSPOAP1. Brain specific; mainly found in the cerebellum, olfactory bulb, cerebral cortex, hippocampus, and inferior colliculus. In the hippocampus, expression occurs in pyramidal and granule neurons, as well as in interneurons. Purkinje cells contain predominantly P-type VSCC, the Q-type being a prominent calcium current in cerebellar granule cells.

It is found in the cell membrane. It carries out the reaction Ca(2+)(in) = Ca(2+)(out). Functionally, voltage-sensitive calcium channels (VSCC) mediate the entry of calcium ions into excitable cells and are also involved in a variety of calcium-dependent processes, including muscle contraction, hormone or neurotransmitter release, gene expression, cell motility, cell division and cell death. The isoform alpha-1A gives rise to P and/or Q-type calcium currents. P/Q-type calcium channels belong to the 'high-voltage activated' (HVA) group and are specifically blocked by the spider omega-agatoxin-IVA (AC P54282). They are however insensitive to dihydropyridines (DHP). This chain is Voltage-dependent P/Q-type calcium channel subunit alpha-1A, found in Mus musculus (Mouse).